We begin with the raw amino-acid sequence, 934 residues long: Complement component C6 (934 aa).

The N-terminal stretch at 1–21 (MTRHLTLCFILLIILIDKSEA) is a signal peptide. Cystine bridges form between Cys-22-Cys-61, Cys-24-Cys-65, Cys-35-Cys-73, Cys-39-Cys-78, Cys-82-Cys-117, Cys-93-Cys-127, Cys-96-Cys-133, Cys-140-Cys-151, Cys-146-Cys-164, Cys-158-Cys-173, and Cys-180-Cys-218. TSP type-1 domains are found at residues 22-79 (CFCD…ETCP) and 81-134 (NCVL…ELCK). 2 C-linked (Man) tryptophan glycosylation sites follow: Trp-29 and Trp-32. O-linked (Fuc...) serine glycosylation is present at Ser-38. A C-linked (Man) tryptophan glycan is attached at Trp-90. Residues 138–175 (TDCKNKFLCDSGRCIPSKLKCNGENDCGDNSDERNCGR) form the LDL-receptor class A domain. Ca(2+) contacts are provided by Leu-156, Asn-159, Glu-161, Asp-163, Asp-169, and Glu-170. The MACPF domain occupies 176 to 522 (TKPVCSRTYT…EYAAKFDPCQ (347 aa)). Residues 278–290 (SFYVPIFYSSKKS) traverse the membrane as a beta stranded segment. Asn-324 carries an N-linked (GlcNAc...) asparagine glycan. Residue Thr-392 is glycosylated (O-linked (Fuc...) threonine). Intrachain disulfides connect Cys-399/Cys-420, Cys-499/Cys-623, Cys-521/Cys-570, Cys-523/Cys-539, Cys-526/Cys-541, Cys-543/Cys-552, Cys-577/Cys-611, Cys-589/Cys-601, Cys-644/Cys-686, Cys-672/Cys-699, Cys-704/Cys-746, Cys-732/Cys-761, Cys-773/Cys-823, Cys-784/Cys-801, Cys-786/Cys-837, Cys-793/Cys-816, Cys-862/Cys-873, Cys-867/Cys-919, Cys-880/Cys-897, Cys-882/Cys-932, and Cys-888/Cys-912. A beta stranded transmembrane segment spans residues 402-415 (YETKKRFLFFTKTY). One can recognise an EGF-like domain in the interval 523–553 (CAPCPNNGRPRLSGTECLCVCQSGTYGENCE). One can recognise a TSP type-1 3 domain in the interval 565–612 (DGNWGCWSSWSACNAAYRRSRSRECNNPEPQRGGQRCEGKHWQEEDCT). Residues Trp-568, Trp-571, and Trp-574 are each glycosylated (C-linked (Man) tryptophan). CCP stretches follow at residues 611 to 688 (CTFS…RCLP) and 689 to 765 (DRTW…EKDI). 2 Sushi domains span residues 642–701 (SGCP…ECQR) and 702–763 (TECL…SCEK). Residues 642–934 (SGCPQPPLPE…EILNPGRCLD (293 aa)) form a C5B-binding domain region. 2 factor I module (FIM) regions span residues 766 to 840 (LTKS…CQEG) and 858 to 934 (KRVP…RCLD). Residues 780–839 (SGSECVCMSPEEDCSSYSEDLCIFDEGSSQYFTSSACKFLAEKCLNSNQFHFVHAGSCQE) enclose the Kazal-like 1 domain. The region spanning 876-934 (HTSNCVCLLPPQCPKDENQLHCVKMGSSMRGKTVNICTLGAVRCANRKVEILNPGRCLD) is the Kazal-like 2 domain.

This sequence belongs to the complement C6/C7/C8/C9 family. In terms of assembly, component of the membrane attack complex (MAC), composed of complement C5b, C6, C7, C8A, C8B, C8G and multiple copies of the pore-forming subunit C9. Post-translationally, all cysteine residues are assumed to be cross-linked to one another. Individual modules containing an even number of conserved cysteine residues are supposed to have disulfide linkages only within the same module.

Its subcellular location is the secreted. It localises to the target cell membrane. Its activity is regulated as follows. Membrane attack complex (MAC) assembly is inhibited by CD59, thereby protecting self-cells from damage during complement activation. MAC assembly is also inhibited by clusterin (CLU) chaperones that inhibit polymerization of C9. Component of the membrane attack complex (MAC), a multiprotein complex activated by the complement cascade, which inserts into a target cell membrane and forms a pore, leading to target cell membrane rupture and cell lysis. The MAC is initiated by proteolytic cleavage of C5 into complement C5b in response to the classical, alternative, lectin and GZMK complement pathways. The complement pathways consist in a cascade of proteins that leads to phagocytosis and breakdown of pathogens and signaling that strengthens the adaptive immune system. Together with component C5b, involved in MAC complex assembly: complement C5b and C6 associate with the outer leaflet of target cell membrane, reducing the energy for membrane bending. This chain is Complement component C6 (C6), found in Rattus norvegicus (Rat).